Reading from the N-terminus, the 24-residue chain is Chlorate reductase subunit beta (24 aa).

In terms of assembly, heterotrimer of alpha, beta and gamma subunits. [3Fe-4S] cluster serves as cofactor. Requires [4Fe-4S] cluster as cofactor.

It is found in the cytoplasm. Functionally, electron transfer subunit of the chlorate reductase. This Stutzerimonas chloritidismutans (Pseudomonas chloritidismutans) protein is Chlorate reductase subunit beta.